We begin with the raw amino-acid sequence, 338 residues long: Fructose-1,6-bisphosphatase 1 (338 aa).

Alanine 2 is subject to N-acetylalanine. Residues 18–22 (VMEEG) and 28–32 (TGEMT) contribute to the AMP site. Aspartate 69 and glutamate 98 together coordinate Mg(2+). 113-114 (KY) lines the AMP pocket. Mg(2+)-binding residues include aspartate 119, leucine 121, and aspartate 122. 122–125 (DGSS) provides a ligand contact to substrate. AMP is bound at residue arginine 141. Lysine 151 carries the N6-succinyllysine modification. Substrate-binding positions include 213–216 (NEGY), 244–249 (RYVGSM), tyrosine 265, and 275–277 (KLR). Phosphotyrosine is present on residues tyrosine 216, tyrosine 245, and tyrosine 265. Glutamate 281 contributes to the Mg(2+) binding site.

It belongs to the FBPase class 1 family. In terms of assembly, homotetramer. Mg(2+) serves as cofactor.

The catalysed reaction is beta-D-fructose 1,6-bisphosphate + H2O = beta-D-fructose 6-phosphate + phosphate. Its pathway is carbohydrate biosynthesis; gluconeogenesis. Subject to complex allosteric regulation. The enzyme can assume an active R-state, or an inactive T-state. Intermediate conformations may exist. AMP acts as an allosteric inhibitor. AMP binding affects the turnover of bound substrate and not the affinity for substrate. Fructose 2,6-bisphosphate acts as a competitive inhibitor. Fructose 2,6-bisphosphate and AMP have synergistic effects. Its function is as follows. Catalyzes the hydrolysis of fructose 1,6-bisphosphate to fructose 6-phosphate in the presence of divalent cations, acting as a rate-limiting enzyme in gluconeogenesis. Plays a role in regulating glucose sensing and insulin secretion of pancreatic beta-cells. Appears to modulate glycerol gluconeogenesis in liver. Important regulator of appetite and adiposity; increased expression of the protein in liver after nutrient excess increases circulating satiety hormones and reduces appetite-stimulating neuropeptides and thus seems to provide a feedback mechanism to limit weight gain. This chain is Fructose-1,6-bisphosphatase 1 (FBP1), found in Oryctolagus cuniculus (Rabbit).